The following is a 120-amino-acid chain: Holo-[acyl-carrier-protein] synthase (120 aa).

2 residues coordinate Mg(2+): aspartate 8 and glutamate 58.

It belongs to the P-Pant transferase superfamily. AcpS family. Mg(2+) serves as cofactor.

Its subcellular location is the cytoplasm. The enzyme catalyses apo-[ACP] + CoA = holo-[ACP] + adenosine 3',5'-bisphosphate + H(+). Its function is as follows. Transfers the 4'-phosphopantetheine moiety from coenzyme A to a Ser of acyl-carrier-protein. The sequence is that of Holo-[acyl-carrier-protein] synthase from Streptococcus sanguinis (strain SK36).